The primary structure comprises 662 residues: MSLVPFSQLWRGVRTRGPVEQASSSSSSSSSSRRTWYAPARSQTGVQVAAYEPTAVLQLAPSAVSRRSTPVRSSIIADLSSSGSGDGEGERGDATGSRDEASSAFAGSSKVLKINIDLLLWRCRTSRIRARQTLDLNERKSLYKAAEDGLRRCLALDPADPRAYVVLGKTLVQQKRYDEARQLYQDGCANTGNVNPYIWSAWGWLEARTGNVERARKLYDAAVVVDGTHACAWHKWGMLEKGQGNFTRARDLWMQGIQRCRRKPQSQNAYLYNALGCMAAQLGRVGEARSWFEEGTRSAEGAASVALWQAWAVLEAKQGDPTVVRYLFRKALGANPRSRYVHLAWALWERRQGNPQHCLALLRRGCELNPTDPALYQAWALVEKQAGRIERARELFEQGLRADPSDLYMWQAYGVMEAEQGNMDRARQLFQEGVWADPRSPSTVYVFHAWGALEWQAGNVQTARELFKAAVRVDPKSETTWASWIAMESELGEIERVDELRIRQAERQWEFVVPAGFTTRPAPGLVDTLARFFSARGFGSDGNGSSSSNGGAGGQQAGSEAAAGIRAADSVDLTVDGGGQLRFKDVERLVESNDLSALPDFLSSDDDVEASLRPPGAAGRRQQQPAGSGTGGDNINGSAGYGKLQVPSLVPRPKATPLRSMG.

The transit peptide at 1–50 (MSLVPFSQLWRGVRTRGPVEQASSSSSSSSSSRRTWYAPARSQTGVQVAA) directs the protein to the chloroplast. 2 disordered regions span residues 14–38 (RTRGPVEQASSSSSSSSSSRRTWYA) and 75–101 (IIADLSSSGSGDGEGERGDATGSRDEA). The segment covering 23-32 (SSSSSSSSSS) has biased composition (low complexity). Positions 88–101 (EGERGDATGSRDEA) are enriched in basic and acidic residues. TPR repeat units lie at residues 126–160 (SRIRARQTLDLNERKSLYKAAEDGLRRCLALDPAD), 161–194 (PRAYVVLGKTLVQQKRYDEARQLYQDGCANTGNV), 196–229 (PYIWSAWGWLEARTGNVERARKLYDAAVVVDGTH), 231–263 (CAWHKWGMLEKGQGNFTRARDLWMQGIQRCRRK), 269–302 (AYLYNALGCMAAQLGRVGEARSWFEEGTRSAEGA), 305–338 (VALWQAWAVLEAKQGDPTVVRYLFRKALGANPRS), 339–372 (RYVHLAWALWERRQGNPQHCLALLRRGCELNPTD), 373–406 (PALYQAWALVEKQAGRIERARELFEQGLRADPSD), 408–440 (YMWQAYGVMEAEQGNMDRARQLFQEGVWADPRS), and 444–477 (VYVFHAWGALEWQAGNVQTARELFKAAVRVDPKS). 2 disordered regions span residues 540–563 (SDGNGSSSSNGGAGGQQAGSEAAA) and 598–662 (LPDF…RSMG).

As to quaternary structure, part of a 300 kDa complex that associates with RNA.

Its subcellular location is the plastid. The protein resides in the chloroplast stroma. Involved, directly or indirectly, in the processing of the chloroplast encoded psbB mRNA to its mature form, acting via the 5'-UTR of the psbB mRNA. The protein is PsbB mRNA maturation factor Mbb1, chloroplastic (MBB1) of Chlamydomonas reinhardtii (Chlamydomonas smithii).